Reading from the N-terminus, the 434-residue chain is [Pyruvate dehydrogenase (acetyl-transferring)] kinase isozyme 1, mitochondrial (434 aa).

Residues 1-26 constitute a mitochondrion transit peptide; it reads MRLARLLRGGTSVRPLCAVPCASRSL. Phosphotyrosine; by FGFR1 is present on Y136. Residues 161-391 form the Histidine kinase domain; the sequence is TEYKESFGVD…DAVIYIKALS (231 aa). Y241 carries the post-translational modification Phosphotyrosine; by FGFR1, ABL1, FLT3 and JAK2. At Y242 the chain carries Phosphotyrosine; by FGFR1. ATP-binding positions include 277-284, D316, 335-336, and 352-357; these read ELFKNAMR, ST, and GFGYGL. T336 bears the Phosphothreonine mark. K403 is subject to N6-succinyllysine.

The protein belongs to the PDK/BCKDK protein kinase family. Homodimer, and heterodimer with PDK2. Interacts with the pyruvate dehydrogenase complex subunit DLAT, and is part of the multimeric pyruvate dehydrogenase complex that contains multiple copies of pyruvate dehydrogenase (E1), dihydrolipoamide acetyltransferase (DLAT, E2) and lipoamide dehydrogenase (DLD, E3). Interacts with phosphoglycerate kinase PGK1; the interaction is direct, occurs under hypoxic conditions and leads to PDK1-mediated inhibition of pyruvate dehydrogenase complex activity. Phosphorylated by constitutively activated ABL1, FGFR1, FLT3 and JAK2 (in vitro), and this may also occur in cancer cells that express constitutively activated ABL1, FGFR1, FLT3 and JAK2. Phosphorylation at Tyr-241 and Tyr-242 strongly increases kinase activity, while phosphorylation at Tyr-136 has a lesser effect. Phosphorylated under hypoxic conditions at Thr-336 by phosphoglycerate kinase PGK1 which has an activating effect. As to expression, detected in pancreas islets (at protein level). Expressed predominantly in the heart.

The protein resides in the mitochondrion matrix. It carries out the reaction L-seryl-[pyruvate dehydrogenase E1 alpha subunit] + ATP = O-phospho-L-seryl-[pyruvate dehydrogenase E1 alpha subunit] + ADP + H(+). With respect to regulation, activated by binding to the pyruvate dehydrogenase complex subunit DLAT. Strongly activated by NADH plus acetyl-coenzyme A. Inhibited by dichloroacetate. In terms of biological role, kinase that plays a key role in regulation of glucose and fatty acid metabolism and homeostasis via phosphorylation of the pyruvate dehydrogenase subunits PDHA1 and PDHA2. This inhibits pyruvate dehydrogenase activity, and thereby regulates metabolite flux through the tricarboxylic acid cycle, down-regulates aerobic respiration and inhibits the formation of acetyl-coenzyme A from pyruvate. Plays an important role in cellular responses to hypoxia and is important for cell proliferation under hypoxia. This chain is [Pyruvate dehydrogenase (acetyl-transferring)] kinase isozyme 1, mitochondrial (Pdk1), found in Rattus norvegicus (Rat).